The sequence spans 179 residues: Adenine phosphoribosyltransferase (179 aa).

The protein belongs to the purine/pyrimidine phosphoribosyltransferase family. As to quaternary structure, homodimer.

It localises to the cytoplasm. The enzyme catalyses AMP + diphosphate = 5-phospho-alpha-D-ribose 1-diphosphate + adenine. It functions in the pathway purine metabolism; AMP biosynthesis via salvage pathway; AMP from adenine: step 1/1. Functionally, catalyzes a salvage reaction resulting in the formation of AMP, that is energically less costly than de novo synthesis. This Bradyrhizobium sp. (strain ORS 278) protein is Adenine phosphoribosyltransferase.